Reading from the N-terminus, the 274-residue chain is Putative phosphoenolpyruvate synthase regulatory protein (274 aa).

155-162 provides a ligand contact to ADP; that stretch reads GVSRSGKT.

It belongs to the pyruvate, phosphate/water dikinase regulatory protein family. PSRP subfamily.

The catalysed reaction is [pyruvate, water dikinase] + ADP = [pyruvate, water dikinase]-phosphate + AMP + H(+). It carries out the reaction [pyruvate, water dikinase]-phosphate + phosphate + H(+) = [pyruvate, water dikinase] + diphosphate. In terms of biological role, bifunctional serine/threonine kinase and phosphorylase involved in the regulation of the phosphoenolpyruvate synthase (PEPS) by catalyzing its phosphorylation/dephosphorylation. This Laribacter hongkongensis (strain HLHK9) protein is Putative phosphoenolpyruvate synthase regulatory protein.